The following is a 483-amino-acid chain: Regulatory protein ViaA (483 aa).

This sequence belongs to the ViaA family. As to quaternary structure, homodimer. Interacts with RavA.

It is found in the cytoplasm. Functionally, component of the RavA-ViaA chaperone complex, which may act on the membrane to optimize the function of some of the respiratory chains. ViaA stimulates the ATPase activity of RavA. In Shigella dysenteriae serotype 1 (strain Sd197), this protein is Regulatory protein ViaA.